The chain runs to 533 residues: Neuropilin and tolloid-like protein 1 (533 aa).

The signal sequence occupies residues 1-22 (MIYGRSLFHIIASLIILHSSGA). Residues 23–344 (TKKGTEKQIT…LDQLTNTSGT (322 aa)) are Extracellular-facing. 7 disulfide bridges follow: Cys-41-Cys-68, Cys-96-Cys-118, Cys-172-Cys-202, Cys-229-Cys-251, Cys-292-Cys-304, Cys-299-Cys-317, and Cys-311-Cys-326. CUB domains are found at residues 41–155 (CGTW…YNFT) and 172–287 (CEFE…FTSF). An LDL-receptor class A domain is found at 291 to 327 (PCEGNTFFCHSNMCINNTLVCNGLQNCVYPWDENHCK). Residue Asn-306 is glycosylated (N-linked (GlcNAc...) asparagine). Asn-340 is a glycosylation site (N-linked (GlcNAc...) asparagine). Residues 345-365 (VIGVTSCIVIILIIVSVIVQI) traverse the membrane as a helical segment. Residues 366–533 (KQPRKKYVQR…HESEYNTTRV (168 aa)) lie on the Cytoplasmic side of the membrane. At Tyr-417 the chain carries Phosphotyrosine. The short motif at 531-533 (TRV) is the PDZ-binding element.

In terms of assembly, interacts with PLZ domains of DLG2, DLG3 and DLG4 via its C-terminal TRV domain. Interacts with GRIN2A and GRIN2B via its CUB domains. In terms of tissue distribution, expressed only in brain. Present throughout the central nervous system. Highly expressed in the hippocampal CA3 region, olfactory bulb and tubercle, caudate putamen, and neocortex in the adult brain.

Its subcellular location is the membrane. It localises to the postsynaptic density membrane. In terms of biological role, involved in the development and/or maintenance of neuronal circuitry. Accessory subunit of the neuronal N-methyl-D-aspartate receptor (NMDAR) critical for maintaining the abundance of GRIN2A-containing NMDARs in the postsynaptic density. Regulates long-term NMDA receptor-dependent synaptic plasticity and cognition, at least in the context of spatial learning and memory. The sequence is that of Neuropilin and tolloid-like protein 1 (Neto1) from Mus musculus (Mouse).